A 471-amino-acid polypeptide reads, in one-letter code: Light-independent protochlorophyllide reductase subunit N (471 aa).

[4Fe-4S] cluster is bound by residues cysteine 22, cysteine 47, and cysteine 107.

It belongs to the BchN/ChlN family. As to quaternary structure, protochlorophyllide reductase is composed of three subunits; ChlL, ChlN and ChlB. Forms a heterotetramer of two ChlB and two ChlN subunits. The cofactor is [4Fe-4S] cluster.

The protein localises to the plastid. It localises to the chloroplast. The catalysed reaction is chlorophyllide a + oxidized 2[4Fe-4S]-[ferredoxin] + 2 ADP + 2 phosphate = protochlorophyllide a + reduced 2[4Fe-4S]-[ferredoxin] + 2 ATP + 2 H2O. It functions in the pathway porphyrin-containing compound metabolism; chlorophyll biosynthesis (light-independent). Its function is as follows. Component of the dark-operative protochlorophyllide reductase (DPOR) that uses Mg-ATP and reduced ferredoxin to reduce ring D of protochlorophyllide (Pchlide) to form chlorophyllide a (Chlide). This reaction is light-independent. The NB-protein (ChlN-ChlB) is the catalytic component of the complex. This Anthoceros angustus (Hornwort) protein is Light-independent protochlorophyllide reductase subunit N.